A 200-amino-acid polypeptide reads, in one-letter code: Cytochrome c biogenesis ATP-binding export protein CcmA (200 aa).

The 200-residue stretch at 1–200 (MRLSGNGLRC…ARELRIGGAA (200 aa)) folds into the ABC transporter domain. 35–42 (GPNGAGKT) is an ATP binding site.

Belongs to the ABC transporter superfamily. CcmA exporter (TC 3.A.1.107) family. The complex is composed of two ATP-binding proteins (CcmA) and two transmembrane proteins (CcmB).

Its subcellular location is the cell inner membrane. The catalysed reaction is heme b(in) + ATP + H2O = heme b(out) + ADP + phosphate + H(+). Its function is as follows. Part of the ABC transporter complex CcmAB involved in the biogenesis of c-type cytochromes; once thought to export heme, this seems not to be the case, but its exact role is uncertain. Responsible for energy coupling to the transport system. This chain is Cytochrome c biogenesis ATP-binding export protein CcmA, found in Nitrobacter winogradskyi (strain ATCC 25391 / DSM 10237 / CIP 104748 / NCIMB 11846 / Nb-255).